A 284-amino-acid polypeptide reads, in one-letter code: Elongation factor Ts (284 aa).

The tract at residues 80-83 (TDFV) is involved in Mg(2+) ion dislocation from EF-Tu.

Belongs to the EF-Ts family.

The protein resides in the cytoplasm. Functionally, associates with the EF-Tu.GDP complex and induces the exchange of GDP to GTP. It remains bound to the aminoacyl-tRNA.EF-Tu.GTP complex up to the GTP hydrolysis stage on the ribosome. This Neisseria meningitidis serogroup A / serotype 4A (strain DSM 15465 / Z2491) protein is Elongation factor Ts.